The following is a 134-amino-acid chain: Small ribosomal subunit protein uS9 (134 aa).

The interval 109–134 (DARRTEPHKPSKSSKGPRAKRQKSYR) is disordered. The span at 118 to 134 (PSKSSKGPRAKRQKSYR) shows a compositional bias: basic residues.

It belongs to the universal ribosomal protein uS9 family.

In Methanococcus maripaludis (strain C5 / ATCC BAA-1333), this protein is Small ribosomal subunit protein uS9.